The chain runs to 487 residues: Ribosome biogenesis protein YTM1 (487 aa).

Positions 13–95 (VKVTFTTNEA…ETNLTLQYVR (83 aa)) are ubiquitin-like (UBL) domain. WD repeat units lie at residues 122–161 (SPAGRWSGENFSRGQERILSASYDGLLRIWNASGEVLVTA), 168–206 (GHSASIKAAKFISSTQIASTGMDRSVRVWKYTDPGASGQ), 217–256 (GHRASVDSLEVHGPSKRILTASADGSVALWSASKSSSPEA), 379–419 (GHTN…PASG), and 451–487 (GEGAKVFGVVWDRELGILSGGEDKKVQVNRGRDVVRE). Positions 253-277 (SPEADASLLPNAHTSKRRKVASSVT) are disordered.

The protein belongs to the WD repeat WDR12/YTM1 family. Component of the NOP7 complex, composed of ERB1, NOP7 and YTM1. The complex is held together by ERB1, which interacts with NOP7 via its N-terminal domain and with YTM1 via a high-affinity interaction between the seven-bladed beta-propeller domains of the 2 proteins. The NOP7 complex associates with the 66S pre-ribosome. Interacts (via UBL domain) with MDN1 (via VWFA/MIDAS domain).

The protein localises to the nucleus. Its subcellular location is the nucleolus. It is found in the nucleoplasm. Functionally, component of the NOP7 complex, which is required for maturation of the 25S and 5.8S ribosomal RNAs and formation of the 60S ribosome. This is Ribosome biogenesis protein YTM1 from Podospora anserina (strain S / ATCC MYA-4624 / DSM 980 / FGSC 10383) (Pleurage anserina).